A 90-amino-acid chain; its full sequence is UPF0237 protein MK1213 (90 aa).

The region spanning 5 to 79 (VVTVIGADRP…EELGVDVIVQ (75 aa)) is the ACT domain.

This sequence belongs to the UPF0237 family.

The chain is UPF0237 protein MK1213 from Methanopyrus kandleri (strain AV19 / DSM 6324 / JCM 9639 / NBRC 100938).